Here is a 1024-residue protein sequence, read N- to C-terminus: Probable alpha-mannosidase At5g13980 (1024 aa).

The N-terminal stretch at 1–21 is a signal peptide; sequence MDLAKFLCWIVLLLGISLVES. Asn27 carries an N-linked (GlcNAc...) asparagine glycan. His46 and Asp48 together coordinate Zn(2+). The N-linked (GlcNAc...) asparagine glycan is linked to Asn63. Asp168 is a Zn(2+) binding site. Asn278 is a glycosylation site (N-linked (GlcNAc...) asparagine). His410 provides a ligand contact to Zn(2+). Cys461 and Cys469 are disulfide-bonded. Residues Asn465, Asn475, Asn637, Asn658, Asn733, and Asn823 are each glycosylated (N-linked (GlcNAc...) asparagine). Residues Cys827 and Cys832 are joined by a disulfide bond.

The protein belongs to the glycosyl hydrolase 38 family. Homodimer. Zn(2+) is required as a cofactor.

It catalyses the reaction Hydrolysis of terminal, non-reducing alpha-D-mannose residues in alpha-D-mannosides.. Liberates mannose from p-nitrophenyl-alpha-D-mannoside in vitro. This chain is Probable alpha-mannosidase At5g13980, found in Arabidopsis thaliana (Mouse-ear cress).